We begin with the raw amino-acid sequence, 306 residues long: Pantothenate kinase (306 aa).

90 to 97 is a binding site for ATP; it reads GSVAVGKS.

This sequence belongs to the prokaryotic pantothenate kinase family.

Its subcellular location is the cytoplasm. It carries out the reaction (R)-pantothenate + ATP = (R)-4'-phosphopantothenate + ADP + H(+). The protein operates within cofactor biosynthesis; coenzyme A biosynthesis; CoA from (R)-pantothenate: step 1/5. In Lactococcus lactis subsp. cremoris (strain SK11), this protein is Pantothenate kinase.